Reading from the N-terminus, the 78-residue chain is UPF0612 protein new22 (78 aa).

The protein belongs to the UPF0612 family.

The polypeptide is UPF0612 protein new22 (new22) (Schizosaccharomyces pombe (strain 972 / ATCC 24843) (Fission yeast)).